We begin with the raw amino-acid sequence, 80 residues long: Cell division activator CedA (80 aa).

The protein belongs to the CedA family.

In terms of biological role, activates the cell division inhibited by chromosomal DNA over-replication. In Escherichia coli O139:H28 (strain E24377A / ETEC), this protein is Cell division activator CedA.